The following is a 396-amino-acid chain: NAD(P)H oxidoreductase RTN4IP1, mitochondrial (396 aa).

Residues 1 to 40 (MGFLKTCVFRRNACTAVCFWRSQVVQKPSVRKISTTSPRS) constitute a mitochondrion transit peptide. The region spanning 52–393 (GSNEVLRFTQ…RGHARGKTVI (342 aa)) is the Enoyl reductase (ER) domain. The NADPH site is built by serine 214, glycine 216, valine 217, serine 237, tyrosine 255, asparagine 276, leucine 300, alanine 341, phenylalanine 343, histidine 386, alanine 387, and arginine 388.

The protein belongs to the zinc-containing alcohol dehydrogenase family. Quinone oxidoreductase subfamily. Interacts with RTN4, UQCRC1 and UQCRC2.

The protein resides in the mitochondrion matrix. Its subcellular location is the mitochondrion outer membrane. The catalysed reaction is a 3-demethylubiquinone + NADH + 2 H(+) = a 3-demethylubiquinol + NAD(+). It carries out the reaction a 3-demethylubiquinone + NADPH + 2 H(+) = a 3-demethylubiquinol + NADP(+). The enzyme catalyses 3-demethylubiquinone-10 + NADH + 2 H(+) = 3-demethylubiquinol-10 + NAD(+). It catalyses the reaction 3-demethylubiquinone-10 + NADPH + 2 H(+) = 3-demethylubiquinol-10 + NADP(+). Its pathway is cofactor biosynthesis; ubiquinone biosynthesis. In terms of biological role, NAD(P)H oxidoreductase involved in the ubiquinone biosynthetic pathway. Required for the O-methyltransferase activity of COQ3. Able to catalyze the oxidoreduction of 3-demethylubiquinone into 3-demethylubiquinol in vitro. However, it is unclear if 3-demethylubiquinone constitutes a substrate in vivo. May also play a role in the regulation of retinal ganglion cell (RGC) neurite outgrowth, and hence in the development of the inner retina and optic nerve. Appears to be a potent inhibitor of regeneration following spinal cord injury. The protein is NAD(P)H oxidoreductase RTN4IP1, mitochondrial (RTN4IP1) of Bos taurus (Bovine).